Reading from the N-terminus, the 368-residue chain is Peptide chain release factor 2 (368 aa).

Q250 carries the post-translational modification N5-methylglutamine.

It belongs to the prokaryotic/mitochondrial release factor family. In terms of processing, methylated by PrmC. Methylation increases the termination efficiency of RF2.

It is found in the cytoplasm. Functionally, peptide chain release factor 2 directs the termination of translation in response to the peptide chain termination codons UGA and UAA. The polypeptide is Peptide chain release factor 2 (Chlamydia abortus (strain DSM 27085 / S26/3) (Chlamydophila abortus)).